The primary structure comprises 153 residues: UPF0178 protein Ccel_2994 (153 aa).

This sequence belongs to the UPF0178 family.

This Ruminiclostridium cellulolyticum (strain ATCC 35319 / DSM 5812 / JCM 6584 / H10) (Clostridium cellulolyticum) protein is UPF0178 protein Ccel_2994.